The sequence spans 331 residues: D-lactate dehydrogenase (331 aa).

NAD(+) is bound by residues 156–157 (RI), D176, 206–207 (MP), 233–235 (TAR), and D259. R235 is a catalytic residue. E264 is a catalytic residue. The active-site Proton donor is H296.

The protein belongs to the D-isomer specific 2-hydroxyacid dehydrogenase family.

It carries out the reaction (R)-lactate + NAD(+) = pyruvate + NADH + H(+). This Treponema pallidum (strain Nichols) protein is D-lactate dehydrogenase (ldhD).